The primary structure comprises 164 residues: Transcription factor MafF (164 aa).

A basic motif region spans residues 51–76 (RLKQRRRTLKNRGYAASCRVKRVCQK). The 64-residue stretch at 51-114 (RLKQRRRTLK…DALRGKCEAL (64 aa)) folds into the bZIP domain. The leucine-zipper stretch occupies residues 79–93 (LQKQKSELEREVDKL). The interval 141–164 (KSTPGSGSGPAHGPDPAHGPASCS) is disordered. Low complexity predominate over residues 149–164 (GPAHGPDPAHGPASCS).

Belongs to the bZIP family. Maf subfamily. Monomer and homo- or heterodimer. Interacts with MIP. Forms high affinity heterodimers with members of the CNC-bZIP family such as NFE2L1/NRF1. Expressed in the term myometrium and kidney.

The protein resides in the nucleus. Its function is as follows. Since they lack a putative transactivation domain, the small Mafs behave as transcriptional repressors when they dimerize among themselves. However, they seem to serve as transcriptional activators by dimerizing with other (usually larger) basic-zipper proteins, such as NFE2L1/NRF1, and recruiting them to specific DNA-binding sites. Interacts with the upstream promoter region of the oxytocin receptor gene. May be a transcriptional enhancer in the up-regulation of the oxytocin receptor gene at parturition. The chain is Transcription factor MafF (MAFF) from Homo sapiens (Human).